A 231-amino-acid polypeptide reads, in one-letter code: Large ribosomal subunit protein uL1 (231 aa).

It belongs to the universal ribosomal protein uL1 family. In terms of assembly, part of the 50S ribosomal subunit.

Functionally, binds directly to 23S rRNA. The L1 stalk is quite mobile in the ribosome, and is involved in E site tRNA release. Protein L1 is also a translational repressor protein, it controls the translation of the L11 operon by binding to its mRNA. The chain is Large ribosomal subunit protein uL1 from Pseudomonas entomophila (strain L48).